Consider the following 338-residue polypeptide: uncharacterized protein (338 aa).

Residues 1–72 (MASPPILSRE…LNPVEDYDSK (72 aa)) form a disordered region. Positions 24–38 (GGNSEVNIDPSASSS) are enriched in polar residues. A compositionally biased stretch (basic and acidic residues) spans 49–58 (ADTKIDPHLL). The segment covering 59–68 (EEDDLNPVED) has biased composition (acidic residues).

It localises to the cytoplasm. The protein resides in the nucleus. This is an uncharacterized protein from Schizosaccharomyces pombe (strain 972 / ATCC 24843) (Fission yeast).